The following is a 647-amino-acid chain: Acetyl-coenzyme A synthetase (647 aa).

Residues 190 to 193, Thr-308, and Asn-332 contribute to the CoA site; that span reads RGGR. ATP is bound by residues 384-386, 408-413, Asp-497, and Arg-512; these read GEP and DTWWQT. Ser-520 is a binding site for CoA. Arg-523 provides a ligand contact to ATP. Mg(2+)-binding residues include Val-534, His-536, and Val-539. A CoA-binding site is contributed by Arg-581. Residue Lys-606 is modified to N6-acetyllysine.

It belongs to the ATP-dependent AMP-binding enzyme family. Requires Mg(2+) as cofactor. Post-translationally, acetylated. Deacetylation by the SIR2-homolog deacetylase activates the enzyme.

It catalyses the reaction acetate + ATP + CoA = acetyl-CoA + AMP + diphosphate. Catalyzes the conversion of acetate into acetyl-CoA (AcCoA), an essential intermediate at the junction of anabolic and catabolic pathways. AcsA undergoes a two-step reaction. In the first half reaction, AcsA combines acetate with ATP to form acetyl-adenylate (AcAMP) intermediate. In the second half reaction, it can then transfer the acetyl group from AcAMP to the sulfhydryl group of CoA, forming the product AcCoA. This Parvibaculum lavamentivorans (strain DS-1 / DSM 13023 / NCIMB 13966) protein is Acetyl-coenzyme A synthetase.